Here is a 284-residue protein sequence, read N- to C-terminus: Small ribosomal subunit protein uS2 (284 aa).

The segment covering 250 to 272 (QELLAGATASPTAAGAAPGTPEA) has biased composition (low complexity). The disordered stretch occupies residues 250-284 (QELLAGATASPTAAGAAPGTPEADIQTEPTAPQNP).

Belongs to the universal ribosomal protein uS2 family.

The sequence is that of Small ribosomal subunit protein uS2 from Mycobacterium sp. (strain KMS).